The chain runs to 1084 residues: MNNNSKRKTRPTGGGASGGISRYNSNDNSLRPTNNKAGAGGGNGGAAVRPSAQGVYNNTFFMHSATALVGSVVEVRLRSGNIYEGVFRTFSGNFDIALELPACIKSKNLPEEGKVPKHIIFPADTVVTIVAKDFDSQYATAGAFQTDGAISDKCNGARPDEKELEPWDSGANGDIDIELDSAANGWDPNEMFRKNENTFGVTSTFDDSLASYTVPLDKGDSLEFKEAEAKAEKLAAEIENNPTCRDRLDLENGDEEALFAAVERPSTEQDQRGDRGDRERNDRDREREERDRDRDRDRGNKPRGAGDFQLRETMSSDRYITKQTRSITGPQLSHVGMSSQGSGRDRDTRGDGSMMMQSGGGSGQGGSTQSTAALMLAGGLKGVGPAPSANASADSSSKYSGGSMVKRKTVPQGGKVMRNNVPTGGSNVSVSQGGNGNSVGQNKGGYQPSMGMPSQYSYQGNSQIMHGSSQYRNQSHMGGANKLNGDSNANTNKPLPQRQMRQYQGSQSNSSLNYGGEPQSLGKPVHGSHGGHPGQNSNSPPLQTAGPQQQQQQQQQQQQQQQQQQPPQQQQHQNIQPQGQNTQPARQVRTRDNQMQELRQFGQDFQLAPSNTSPPQQQQQQQQQQQQHQVQQQQQRALQQSASPPQQQQQQQQQQQHVVLHQVPQTHLHQAALSQPHYVPQQQPQQAPLPQQQHVPHHMQQKAQQQQLVETQHQHVQKQHQSQPQVQQPPPQLLQDPSQQPLPIYHTMPPPQTSPVVVTSPVLLEQPPPQPMPVVQQQQTQQLATPKPEVSPAPPSSNTTTPTGIASTPTAGVIASAGSEKTTPAAPTPTSNSATVPTGTAATAGGATGTTPVVKKHVLNPSAKPFTPRGPSTPNPSRPHTPQTPVPMTNIYTTTGGHVPPAANQPIYVMQPQHPFPPQTHPQAGQPPRLRRSNYPPMAASQMHVSASAATGQPLITAGPIPQFIQYGHAPHQQQFQSHTYAPMQMRVYPDQPQQLQFMTQTPQSTTPSPGQPHQQFHPPPQPSPAGGGPQPAFTPPTQAATYQLMCVHPQSLLANHYFPPPTPQHPQQNQQQYQIVMQQHQPQ.

Basic residues predominate over residues 1–10; that stretch reads MNNNSKRKTR. A disordered region spans residues 1 to 46; the sequence is MNNNSKRKTRPTGGGASGGISRYNSNDNSLRPTNNKAGAGGGNGGA. Residues 22-33 are compositionally biased toward polar residues; sequence RYNSNDNSLRPT. The 76-residue stretch at 60–135 folds into the Sm domain; it reads FFMHSATALV…VVTIVAKDFD (76 aa). Ser208, Ser211, Ser221, and Ser266 each carry phosphoserine. Disordered regions lie at residues 260–935, 1000–1037, and 1057–1084; these read AAVE…RSNY, TQTPQSTTPSPGQPHQQFHPPPQPSPAGGGPQPAFTPP, and HYFPPPTPQHPQQNQQQYQIVMQQHQPQ. Residues 265–300 show a composition bias toward basic and acidic residues; sequence PSTEQDQRGDRGDRERNDRDREREERDRDRDRDRGN. A compositionally biased stretch (polar residues) spans 312-331; that stretch reads ETMSSDRYITKQTRSITGPQ. Low complexity-rich tracts occupy residues 384-403 and 424-445; these read GPAPSANASADSSSKYSGGS and GGSNVSVSQGGNGNSVGQNKGG. Composition is skewed to polar residues over residues 452–476 and 484–513; these read MPSQYSYQGNSQIMHGSSQYRNQSH and NGDSNANTNKPLPQRQMRQYQGSQSNSSLN. Low complexity-rich tracts occupy residues 540–584, 613–694, 701–711, 733–743, 754–765, 773–788, 796–812, and 822–853; these read PPLQ…NTQP, SPPQ…QQQH, QKAQQQQLVET, LLQDPSQQPLP, SPVVVTSPVLLE, PVVQQQQTQQLATPKP, SSNTTTPTGIASTPTAG, and TTPAAPTPTSNSATVPTGTAATAGGATGTTPV. The span at 871–885 shows a compositional bias: pro residues; the sequence is PSTPNPSRPHTPQTP. Over residues 886 to 896 the composition is skewed to polar residues; sequence VPMTNIYTTTG. Composition is skewed to low complexity over residues 1000-1017 and 1066-1084; these read TQTPQSTTPSPGQPHQQF and HPQQNQQQYQIVMQQHQPQ.

It belongs to the ataxin-2 family. In terms of assembly, homodimer. In the circadian pacemaker neurons, core component of the Atx2-tyf activator complex composed of at least Atx2, tyf, pAbp, Lsm12a. In the circadian pacemaker neurons, also a core component of the Atx2-Not1 repressor complex composed of at least Atx2, tyf, pAbp, me31B. Interacts (via PAM2 motif) with pAbp. Interacts (via N-terminus) with tyf independently of pAbp. Forms a subcomplex composed of Atx2 and pAbP which can associate with the 5' cap of pre-mRNAs independently of tyf, Lsm12a or me31B. Interacts with Lsm12a and me31B.

It localises to the cytoplasm. RNA binding protein that regulates various processes including circadian behaviors, actin filament formation, eye development and oocyte formation. Forms a complex with tyf and pAbp which functions in adult circadian pacemaker neurons to sustain circadian rhythms likely by switching between activator and repressor modes of post-transcriptional regulation via interaction with Lsm12a or me31B. Forms an activator complex (Atx2-tyf activator complex) via association with Lsm12a and activates the TYF-dependent translation of per to maintain 24 hour periodicity in circadian locomotor behaviors. Forms a repressor complex (Atx2-Not1 repressor complex) via the me31B-dependent association with Not1 to promote Not1-dependent post-transcriptional gene silencing and support high-amplitude circadian rhythms in a per-independent manner. Regulates actin filament formation, though it does not directly assemble with actin filaments. Required for oocyte specification and oocyte positioning in the female germline. Also required for normal eye development and bristle morphology. The chain is Ataxin-2 homolog from Drosophila melanogaster (Fruit fly).